The following is a 125-amino-acid chain: MSRRTDKVNELLRREIGTTIQRDFEFPGTIVTVIEVEVTDDLKEGKVWVGVVGKMAPSQVLEKLNSRHGLIQSAVARRVVLRNTPRLTFRLDDSAQRGVDLVNLLEDIDKNLPKAPPADAENDGE.

Belongs to the RbfA family. In terms of assembly, monomer. Binds 30S ribosomal subunits, but not 50S ribosomal subunits or 70S ribosomes.

The protein resides in the cytoplasm. One of several proteins that assist in the late maturation steps of the functional core of the 30S ribosomal subunit. Associates with free 30S ribosomal subunits (but not with 30S subunits that are part of 70S ribosomes or polysomes). Required for efficient processing of 16S rRNA. May interact with the 5'-terminal helix region of 16S rRNA. This chain is Ribosome-binding factor A, found in Akkermansia muciniphila (strain ATCC BAA-835 / DSM 22959 / JCM 33894 / BCRC 81048 / CCUG 64013 / CIP 107961 / Muc).